We begin with the raw amino-acid sequence, 1052 residues long: Malignant fibrous histiocytoma-amplified sequence 1 (1052 aa).

Ala2 bears the N-acetylalanine mark. 13 LRR repeats span residues 64–85 (DIEA…LGSA), 88–109 (SLRV…VAEL), 112–133 (HLTE…VVSA), 136–157 (ELRK…LGAL), 159–180 (HLEE…LSCL), 182–203 (RLRT…LLQL), 205–226 (ALEE…ISAL), 228–249 (ALKI…FCEL), 251–272 (SLES…FSCL), 274–296 (RLKM…LPLA), 297–318 (GLEE…ISGL), 320–341 (RLLT…IVEL), and 343–364 (GLEE…FGQL). A required for interaction with PJA2 region spans residues 64-364 (DIEALNLGNN…AVLPDHFGQL (301 aa)). Residues 64-649 (DIEALNLGNN…DKLLSVAEHR (586 aa)) form a required for interaction with PPP2R2A region. A Roc domain is found at 403-649 (QPAVQPRLKL…DKLLSVAEHR (247 aa)). The residue at position 601 (Lys601) is an N6-acetyllysine.

As to quaternary structure, interacts with RAF1. Interacts with HSPD1. Interacts with PPP2CA; retains PPP2CA into the cytoplasm and excludes it from the nucleus. Interacts with PPP2R2A; the interaction is direct. Interacts with PJA2. Post-translationally, ubiquitinated. Ubiquitination by PJA2 does not lead MFHAS1 to proteasomal degradation but positively regulates its function in polarization of macrophages. As to expression, ubiquitously expressed. Overexpressed in malignant fibrous histiocytomas. Expressed in red blood cells (at protein level).

Its subcellular location is the cytoplasm. Its function is as follows. Probable GTP-binding protein. Functions in innate immunity and more specifically the inflammatory response as a regulator of the Toll-like receptor TLR2 and TLR4 signaling pathways. Negatively regulates the part of the TLR4 signaling pathway that leads to the activation of the transcription factor AP-1. By retaining the phosphatase complex PP2A into the cytoplasm, prevents the dephosphorylation of the AP-1 subunit JUN which is required for proper activation of the transcription factor. Both inhibits and activates the TLR2-dependent signaling pathway. Positively regulates the TLR2 signaling pathway to activate specifically the downstream p38 and JNK MAP kinases and promote the polarization of macrophages toward the pro-inflammatory M1 phenotype. It may also play a role in the regulation of inflammation induced by high glucose through the PKB/AKT signaling pathway. Also involved in erythrocyte differentiation through activation of the ERK1/ERK2 signaling pathway. This chain is Malignant fibrous histiocytoma-amplified sequence 1, found in Homo sapiens (Human).